Here is a 343-residue protein sequence, read N- to C-terminus: 3-keto-steroid reductase (343 aa).

Leu-19 and Thr-42 together coordinate NADP(+). Residues Ser-180 and Tyr-203 each act as proton donor in the active site. The NADP(+) site is built by Tyr-203, Lys-207, and Ser-239. Lys-207 serves as the catalytic Lowers pKa of active site Tyr.

This sequence belongs to the short-chain dehydrogenases/reductases (SDR) family. ERG27 subfamily.

The enzyme catalyses a 3beta-hydroxysteroid + NADP(+) = a 3-oxosteroid + NADPH + H(+). Its pathway is steroid biosynthesis; zymosterol biosynthesis; zymosterol from lanosterol: step 5/6. In terms of biological role, responsible for the reduction of the keto group on the C-3 of sterols. The protein is 3-keto-steroid reductase (ERG27) of Yarrowia lipolytica (strain CLIB 122 / E 150) (Yeast).